The following is a 249-amino-acid chain: 4-hydroxy-tetrahydrodipicolinate reductase (249 aa).

NAD(+) contacts are provided by residues Asp-32, 74-76 (GTT), and 99-102 (SANY). Catalysis depends on His-134, which acts as the Proton donor/acceptor. Position 135 (His-135) interacts with (S)-2,3,4,5-tetrahydrodipicolinate. Lys-138 acts as the Proton donor in catalysis. 144–145 (GT) is a (S)-2,3,4,5-tetrahydrodipicolinate binding site.

The protein belongs to the DapB family.

Its subcellular location is the cytoplasm. It carries out the reaction (S)-2,3,4,5-tetrahydrodipicolinate + NAD(+) + H2O = (2S,4S)-4-hydroxy-2,3,4,5-tetrahydrodipicolinate + NADH + H(+). The enzyme catalyses (S)-2,3,4,5-tetrahydrodipicolinate + NADP(+) + H2O = (2S,4S)-4-hydroxy-2,3,4,5-tetrahydrodipicolinate + NADPH + H(+). Its pathway is amino-acid biosynthesis; L-lysine biosynthesis via DAP pathway; (S)-tetrahydrodipicolinate from L-aspartate: step 4/4. Its function is as follows. Catalyzes the conversion of 4-hydroxy-tetrahydrodipicolinate (HTPA) to tetrahydrodipicolinate. The chain is 4-hydroxy-tetrahydrodipicolinate reductase from Chlorobaculum tepidum (strain ATCC 49652 / DSM 12025 / NBRC 103806 / TLS) (Chlorobium tepidum).